A 421-amino-acid polypeptide reads, in one-letter code: MSKTHLTEQKFSDFALHPQVVEALEKKGFYNCTPIQALALPLTLAGRDVAGQAQTGTGKTMAFLTSTFHYLLSHPAIDDRKVNQPRALIMAPTRELAVQIHADAEPLAQATGLKLGLAYGGDGYDKQLKVLESGVDILIGTTGRLIDYAKQNHINLGAIQVVVLDEADRMYDLGFIKDIRWLFRRMPPAAQRLNMLFSATLSYRVRELAFEQMNNAEYVEVEPEQKTGHRIKEELFYPSNEEKMRLLQTLIEEEWPDRAIIFANTKHRCEDIWGHLAADGHRVGLLTGDVAQKKRLRILDEFTRGDLDILVATDVAARGLHIPAVTHVFNYDLPDDCEDYVHRIGRTGRAGASGHSISLACEEYALNLPAIESYIGHSIPVSKYNPEALMNDLPKPLRLTRSRPGNGPRRAGAPRNRRRSG.

The Q motif motif lies at 9-37; it reads QKFSDFALHPQVVEALEKKGFYNCTPIQA. In terms of domain architecture, Helicase ATP-binding spans 40-219; it reads LPLTLAGRDV…FEQMNNAEYV (180 aa). ATP is bound at residue 53–60; that stretch reads AQTGTGKT. A DEAD box motif is present at residues 165–168; the sequence is DEAD. Residues 245–390 enclose the Helicase C-terminal domain; sequence RLLQTLIEEE…VSKYNPEALM (146 aa). The segment at 396–421 is disordered; that stretch reads PLRLTRSRPGNGPRRAGAPRNRRRSG. Residues 402–414 are compositionally biased toward low complexity; it reads SRPGNGPRRAGAP.

Belongs to the DEAD box helicase family. RhlB subfamily. Component of the RNA degradosome, which is a multiprotein complex involved in RNA processing and mRNA degradation.

Its subcellular location is the cytoplasm. It catalyses the reaction ATP + H2O = ADP + phosphate + H(+). Functionally, DEAD-box RNA helicase involved in RNA degradation. Has RNA-dependent ATPase activity and unwinds double-stranded RNA. The polypeptide is ATP-dependent RNA helicase RhlB (Salmonella agona (strain SL483)).